A 447-amino-acid chain; its full sequence is 3-O-methyltransferase 2 (447 aa).

Residues 264-265 (GG), Asp287, 318-319 (DF), and Arg334 contribute to the S-adenosyl-L-methionine site. His338 acts as the Proton acceptor in catalysis.

Belongs to the class I-like SAM-binding methyltransferase superfamily. Cation-independent O-methyltransferase family. COMT subfamily.

Its function is as follows. S-adenosyl-L-methionine-dependent methyltransferase that preferentially catalyzes the methylation of 3-OH phenolic compounds like isovanillic acid and 3-OH-4-Met cinnamic acid. May play a role in promoting lignin degradation by methylating and inactivating free-hydroxyl phenolic compounds, products of lignin cleavage which are known inhibitors of lignin peroxidases. The protein is 3-O-methyltransferase 2 of Phanerochaete chrysosporium (strain RP-78 / ATCC MYA-4764 / FGSC 9002) (White-rot fungus).